The sequence spans 185 residues: Photosystem I assembly protein Ycf4 (185 aa).

2 helical membrane-spanning segments follow: residues Tyr24–Ser44 and Ile66–Val86.

It belongs to the Ycf4 family.

The protein resides in the cellular thylakoid membrane. Its function is as follows. Seems to be required for the assembly of the photosystem I complex. The chain is Photosystem I assembly protein Ycf4 from Prochlorococcus marinus (strain MIT 9301).